The following is a 331-amino-acid chain: tRNA N6-adenosine threonylcarbamoyltransferase (331 aa).

Residues His-109, His-113, and Tyr-130 each contribute to the Fe cation site. Substrate contacts are provided by residues 130 to 134, Asp-162, Asp-183, and Ser-262; that span reads YLSGG. Asp-290 serves as a coordination point for Fe cation.

Belongs to the KAE1 / TsaD family. It depends on Fe(2+) as a cofactor.

It is found in the cytoplasm. It catalyses the reaction L-threonylcarbamoyladenylate + adenosine(37) in tRNA = N(6)-L-threonylcarbamoyladenosine(37) in tRNA + AMP + H(+). In terms of biological role, required for the formation of a threonylcarbamoyl group on adenosine at position 37 (t(6)A37) in tRNAs that read codons beginning with adenine. Is probably involved in the transfer of the threonylcarbamoyl moiety of threonylcarbamoyl-AMP (TC-AMP) to the N6 group of A37. This is tRNA N6-adenosine threonylcarbamoyltransferase from Saccharolobus islandicus (strain M.16.27) (Sulfolobus islandicus).